A 675-amino-acid chain; its full sequence is Zeaxanthin epoxidase, chloroplastic (675 aa).

Residues methionine 1 to serine 25 constitute a chloroplast transit peptide. FAD is bound by residues arginine 92–glutamate 120 and lysine 370–aspartate 383. An FHA domain is found at isoleucine 558–glycine 622.

The cofactor is FAD.

It localises to the plastid. The protein localises to the chloroplast thylakoid membrane. The enzyme catalyses all-trans-zeaxanthin + 4 reduced [2Fe-2S]-[ferredoxin] + 2 O2 + 4 H(+) = all-trans-violaxanthin + 4 oxidized [2Fe-2S]-[ferredoxin] + 2 H2O. Its pathway is plant hormone biosynthesis; abscisate biosynthesis. With respect to regulation, inhibited by diphenyleneiodonium (DPI). In terms of biological role, converts zeaxanthin into antheraxanthin and subsequently violaxanthin. Involved in the epoxidation of zeaxanthin. This Spinacia oleracea (Spinach) protein is Zeaxanthin epoxidase, chloroplastic.